Here is a 102-residue protein sequence, read N- to C-terminus: MLFLDSYSLLIQFQRFKNWESPRRFSSSFPLLLFVFKPIFAAKLLKEICSSGVLSYSLSFLKIPLSVMRVILGPLPDDKKLKNDAKYSFMNYFIITCIGIIM.

The first 41 residues, 1-41 (MLFLDSYSLLIQFQRFKNWESPRRFSSSFPLLLFVFKPIFA), serve as a signal peptide directing secretion.

This is an uncharacterized protein from Saccharomyces cerevisiae (strain ATCC 204508 / S288c) (Baker's yeast).